The primary structure comprises 344 residues: Probable electron transfer flavoprotein subunit alpha, mitochondrial (344 aa).

284–312 (LYIAIGVSGAVQHLAGMKDSKVIVAINND) contributes to the FAD binding site.

This sequence belongs to the ETF alpha-subunit/FixB family. As to quaternary structure, heterodimer of an alpha and a beta subunit. The cofactor is FAD.

Its subcellular location is the mitochondrion matrix. Its function is as follows. The electron transfer flavoprotein serves as a specific electron acceptor for several dehydrogenases, including five acyl-CoA dehydrogenases, glutaryl-CoA and sarcosine dehydrogenase. It transfers the electrons to the main mitochondrial respiratory chain via ETF-ubiquinone oxidoreductase (ETF dehydrogenase). This Saccharomyces cerevisiae (strain ATCC 204508 / S288c) (Baker's yeast) protein is Probable electron transfer flavoprotein subunit alpha, mitochondrial (AIM45).